Here is a 256-residue protein sequence, read N- to C-terminus: MHLIVASRSDPASVRMLDYLTEKYTFSEKGGVLNHGDFDLVIIEDRHIFHDMSLSGKYDYLVVLSRHSSAADVKSLTAHPTGNFGPSADLGGKPRTINISCPRVMSGTLRRMMESYSGSRFEVTFEATHHGPIFDIPNYYVEIGTTENEWNDPEALSTTVDSVMNPDVRDYDAFVGVGGGHYAPKIKEYFRENSVNIGHIISKHDHDALEPWEIDMAVKRTPGCKGFIMDRKGTRGNVREMVKKYADENSLELITI.

The protein belongs to the DtdA deacylase family. In terms of assembly, monomer. Requires Zn(2+) as cofactor.

It carries out the reaction a D-aminoacyl-tRNA + H2O = a tRNA + a D-alpha-amino acid + H(+). The enzyme catalyses glycyl-tRNA(Ala) + H2O = tRNA(Ala) + glycine + H(+). Functionally, D-aminoacyl-tRNA deacylase with broad substrate specificity. By recycling D-aminoacyl-tRNA to D-amino acids and free tRNA molecules, this enzyme counteracts the toxicity associated with the formation of D-aminoacyl-tRNA entities in vivo. The protein is D-aminoacyl-tRNA deacylase of Thermoplasma acidophilum (strain ATCC 25905 / DSM 1728 / JCM 9062 / NBRC 15155 / AMRC-C165).